A 445-amino-acid polypeptide reads, in one-letter code: Dihydroorotate dehydrogenase (quinone), mitochondrial (445 aa).

A mitochondrion-targeting transit peptide spans 1–16; it reads MNSGFPRILSKKLFTL. A helical membrane pass occupies residues 39 to 56; it reads LLKYTVGIAIGSFAGFYF. Residues 124–128 and Ser-148 contribute to the FMN site; that span reads AGLDK. Substrate is bound at residue Lys-128. Residue 173-177 participates in substrate binding; that stretch reads NRYGF. Residues Asn-221 and Asn-251 each coordinate FMN. Substrate is bound at residue 251–256; sequence NVSSPN. The Nucleophile role is filled by Ser-254. Lys-302 and Ser-330 together coordinate FMN. Position 331–332 (331–332) interacts with substrate; that stretch reads NT. FMN contacts are provided by residues Gly-356, Gly-386, and 407-408; that span reads YT.

The protein belongs to the dihydroorotate dehydrogenase family. Type 2 subfamily. FMN is required as a cofactor.

It is found in the mitochondrion inner membrane. It catalyses the reaction (S)-dihydroorotate + a quinone = orotate + a quinol. It functions in the pathway pyrimidine metabolism; UMP biosynthesis via de novo pathway; orotate from (S)-dihydroorotate (quinone route): step 1/1. Functionally, catalyzes the conversion of dihydroorotate to orotate with quinone as electron acceptor. The protein is Dihydroorotate dehydrogenase (quinone), mitochondrial (URA9) of Kluyveromyces lactis (strain ATCC 8585 / CBS 2359 / DSM 70799 / NBRC 1267 / NRRL Y-1140 / WM37) (Yeast).